The sequence spans 396 residues: S-adenosylmethionine synthase (396 aa).

An ATP-binding site is contributed by histidine 16. Aspartate 18 contributes to the Mg(2+) binding site. Residue glutamate 44 participates in K(+) binding. 2 residues coordinate L-methionine: glutamate 57 and glutamine 100. The segment at 100-110 (QSVDIAQGVDR) is flexible loop. ATP contacts are provided by residues 165 to 167 (DAK), aspartate 240, 246 to 247 (RK), alanine 263, and lysine 267. Position 240 (aspartate 240) interacts with L-methionine. Lysine 271 is a binding site for L-methionine.

Belongs to the AdoMet synthase family. As to quaternary structure, homotetramer; dimer of dimers. Requires Mg(2+) as cofactor. K(+) serves as cofactor.

The protein localises to the cytoplasm. The enzyme catalyses L-methionine + ATP + H2O = S-adenosyl-L-methionine + phosphate + diphosphate. The protein operates within amino-acid biosynthesis; S-adenosyl-L-methionine biosynthesis; S-adenosyl-L-methionine from L-methionine: step 1/1. Functionally, catalyzes the formation of S-adenosylmethionine (AdoMet) from methionine and ATP. The overall synthetic reaction is composed of two sequential steps, AdoMet formation and the subsequent tripolyphosphate hydrolysis which occurs prior to release of AdoMet from the enzyme. The protein is S-adenosylmethionine synthase of Pseudomonas savastanoi pv. phaseolicola (strain 1448A / Race 6) (Pseudomonas syringae pv. phaseolicola (strain 1448A / Race 6)).